Reading from the N-terminus, the 776-residue chain is Mitochondrial intermediate peptidase (776 aa).

A mitochondrion-targeting transit peptide spans 1 to 28 (MRRFSTLSRRLQRVVPASSASTANTSPS). His561 is a binding site for Zn(2+). Glu562 is a catalytic residue. Positions 565 and 568 each coordinate Zn(2+).

Belongs to the peptidase M3 family. The cofactor is Zn(2+).

The protein localises to the mitochondrion matrix. The catalysed reaction is Release of an N-terminal octapeptide as second stage of processing of some proteins imported into the mitochondrion.. Its function is as follows. Cleaves proteins, imported into the mitochondrion, to their mature size. While most mitochondrial precursor proteins are processed to the mature form in one step by mitochondrial processing peptidase (MPP), the sequential cleavage by MIP of an octapeptide after initial processing by MPP is a required step for a subgroup of nuclear-encoded precursor proteins destined for the matrix or the inner membrane. The protein is Mitochondrial intermediate peptidase (OCT1) of Yarrowia lipolytica (strain CLIB 122 / E 150) (Yeast).